The chain runs to 1147 residues: PDZ domain-containing protein 8 (1147 aa).

A helical membrane pass occupies residues 2-24 (GLLLLILASAVLGSFLTLLAQFL). The SMP-LTD domain occupies 87–293 (APPTLETCYF…LPSYKIRFKP (207 aa)). Positions 365 to 448 (TVELIKGNLQ…RVLVYYQRPA (84 aa)) constitute a PDZ domain. Ser490, Ser515, and Ser532 each carry phosphoserine. Positions 504–673 (ELKEETQPLS…DSSDDPQMWE (170 aa)) are disordered. A compositionally biased stretch (polar residues) spans 510-524 (QPLSHSPKRTPTTLS). The segment covering 557 to 576 (KPSTLKTSETTEAAQVSKPQ) has biased composition (polar residues). Positions 580–596 (FKPPVPPRPQGRVPLPP) are enriched in pro residues. Residues 833-884 (KHSFQDTQFQNPTWCDYCKKKVWTKAASQCMFCAYVCHKKCQEKCLAETPLC) form a Phorbol-ester/DAG-type zinc finger. A disordered region spans residues 948–990 (RLSEPGTDLVEPSPKHTPNTSDNEGSDTEVCGSNSPSKRGNSA). 2 positions are modified to phosphoserine: Ser960 and Ser973. Residues 978-987 (CGSNSPSKRG) are compositionally biased toward polar residues. A coiled-coil region spans residues 1021 to 1056 (PTEERIQKLEFMLDKLQNEIDQELEHNNSLVREEKE). Over residues 1126 to 1137 (QLIDSQPFSNIS) the composition is skewed to polar residues. The tract at residues 1126-1147 (QLIDSQPFSNISDDLFGPSESV) is disordered.

Interacts with MSN.

It localises to the endoplasmic reticulum membrane. Functionally, molecular tethering protein that connects endoplasmic reticulum and mitochondria membranes. PDZD8-dependent endoplasmic reticulum-mitochondria membrane tethering is essential for endoplasmic reticulum-mitochondria Ca(2+) transfer. In neurons, involved in the regulation of dendritic Ca(2+) dynamics by regulating mitochondrial Ca(2+) uptake in neurons. This chain is PDZ domain-containing protein 8, found in Mus musculus (Mouse).